Consider the following 258-residue polypeptide: Ribonuclease PH (258 aa).

Phosphate contacts are provided by residues Arg-86 and 124 to 126 (GTR).

Belongs to the RNase PH family. Homohexameric ring arranged as a trimer of dimers.

The enzyme catalyses tRNA(n+1) + phosphate = tRNA(n) + a ribonucleoside 5'-diphosphate. Phosphorolytic 3'-5' exoribonuclease that plays an important role in tRNA 3'-end maturation. Removes nucleotide residues following the 3'-CCA terminus of tRNAs; can also add nucleotides to the ends of RNA molecules by using nucleoside diphosphates as substrates, but this may not be physiologically important. Probably plays a role in initiation of 16S rRNA degradation (leading to ribosome degradation) during starvation. The sequence is that of Ribonuclease PH from Caldicellulosiruptor saccharolyticus (strain ATCC 43494 / DSM 8903 / Tp8T 6331).